The following is a 234-amino-acid chain: MLTLQQVHYYYHQDLFAFDLEVEAGSIVALMGPSGAGKSTLLALLAGFIAPQSGQMALDGRLLNTLSPAQRPFSMLFQEHNLFAHLTVRDNIALGLHPGLKLTSQQQKQVEQAAKQVGIEAYLDRLPEQLSGGQRQRVALARCFVQPNPIWLLDEPFSALDPVLRDEMLSLVKQLAQERAITVLMVTHHLSDARAIASHFAYIDKGTIAAHGPIASLNEKHSHPELVEFFQAAV.

One can recognise an ABC transporter domain in the interval 2–230; the sequence is LTLQQVHYYY…HSHPELVEFF (229 aa). 32–39 is an ATP binding site; that stretch reads GPSGAGKS.

The protein belongs to the ABC transporter superfamily. Thiamine importer (TC 3.A.1.19.1) family. The complex is composed of two ATP-binding proteins (ThiQ), two transmembrane proteins (ThiP) and a solute-binding protein (ThiB).

The protein localises to the cell inner membrane. It catalyses the reaction thiamine(out) + ATP + H2O = thiamine(in) + ADP + phosphate + H(+). Functionally, part of the ABC transporter complex ThiBPQ involved in thiamine import. Responsible for energy coupling to the transport system. The protein is Thiamine import ATP-binding protein ThiQ of Vibrio vulnificus (strain CMCP6).